Consider the following 693-residue polypeptide: Tegument protein UL47 (693 aa).

2 disordered regions span residues 1–32 (MSAREPAGRRRRASTRPRASPVADEPAGDGVG) and 48–126 (ELEA…GYLG). Over residues 48 to 57 (ELEALEEMAG) the composition is skewed to acidic residues. Residues 50–75 (EALEEMAGDEPPVRRRREGPRARRRR) are RNA-binding. A Nuclear localization signal motif is present at residues 63 to 75 (RRRREGPRARRRR). Over residues 63-75 (RRRREGPRARRRR) the composition is skewed to basic residues. The short motif at 647–670 (SVLGPGVRVVDIMSQFRKLLMGDE) is the Nuclear export signal element.

The protein belongs to the alphaherpesvirinae HHV-1 UL47 family. In terms of assembly, interacts with US3 kinase. Interacts with UL31 and UL34; these interactions seem important for efficient virion nuclear egress. Interacts with UL41/VHS. In terms of processing, phosphorylated by US3. This phosphorylation is required for proper nuclear localization.

Its subcellular location is the virion tegument. It localises to the host nucleus. The protein localises to the host cytoplasm. Tegument protein that can bind to various RNA transcripts. Plays a role in the attenuation of selective viral and cellular mRNA degradation by modulating the activity of host shutoff RNase UL41/VHS. Also plays a role in the primary envelopment of virions in the perinuclear space, probably by interacting with two nuclear egress proteins UL31 and UL34. The sequence is that of Tegument protein UL47 from Human herpesvirus 1 (strain F) (HHV-1).